Consider the following 210-residue polypeptide: Actin-related protein 3C (210 aa).

Residues methionine 1 to alanine 21 form the signal peptide.

Belongs to the actin family. Expressed in kidney, stomach, spleen, bone marrow, uterus, testis, placenta, skeletal muscle, mammary gland, lung, fetal liver, and fetal kidney, but not detected in small intestine, brain, and thymus. Expressed in low-metastatic lung adenocarcinoma cells but not in high-metastatic ones.

In terms of biological role, may play a role in the suppression of metastatic potential in lung adenoma carcinoma cells. This is Actin-related protein 3C (ACTR3C) from Homo sapiens (Human).